The sequence spans 543 residues: Zinc finger CCHC domain-containing protein 7 (543 aa).

The interval 51 to 71 (EEEHEEKNSGNSESSSSKPNQ) is disordered. Over residues 59–68 (SGNSESSSSK) the composition is skewed to low complexity. Residues lysine 131, lysine 139, lysine 141, lysine 239, and lysine 254 each participate in a glycyl lysine isopeptide (Lys-Gly) (interchain with G-Cter in SUMO2) cross-link. 3 CCHC-type zinc fingers span residues 241 to 258 (IICR…NCPL), 263 to 280 (RRCF…SCPA), and 304 to 321 (KQCD…ACTE). Residue lysine 339 forms a Glycyl lysine isopeptide (Lys-Gly) (interchain with G-Cter in SUMO2) linkage. A CCHC-type 4 zinc finger spans residues 348 to 365 (AYCYHCAQKGHYGHECPE). Glycyl lysine isopeptide (Lys-Gly) (interchain with G-Cter in SUMO2) cross-links involve residues lysine 412, lysine 417, and lysine 435. Residues 414–543 (PYIKAANENP…FLIKQRKKKS (130 aa)) are disordered. 2 stretches are compositionally biased toward basic and acidic residues: residues 441–457 (QENK…NRNW) and 465–475 (RHREVDEDFPR). A Glycyl lysine isopeptide (Lys-Gly) (interchain with G-Cter in SUMO2) cross-link involves residue lysine 478. Residues 479–491 (TYSSPGSFKTQKP) show a composition bias toward polar residues. Residues serine 482 and serine 485 each carry the phosphoserine modification. Residues lysine 487, lysine 490, and lysine 493 each participate in a glycyl lysine isopeptide (Lys-Gly) (interchain with G-Cter in SUMO2) cross-link. Positions 493-502 (KPFHRSSHYH) are enriched in basic residues. Residues 503-515 (TSREDKSPKEGKR) are compositionally biased toward basic and acidic residues. Lysine 537 is covalently cross-linked (Glycyl lysine isopeptide (Lys-Gly) (interchain with G-Cter in SUMO2)).

As to quaternary structure, component of a nucleolar TRAMP-like complex, an ATP-dependent exosome regulatory complex consisting of a helicase (MTREX), an oligadenylate polymerase (TENT4B or TENT4A), and a substrate specific RNA-binding factor (ZCCHC7 or ZCCHC8). Several TRAMP-like complexes exist with specific compositions and are associated with nuclear, or nucleolar RNA exosomes.

It localises to the nucleus. The protein localises to the nucleolus. In Homo sapiens (Human), this protein is Zinc finger CCHC domain-containing protein 7 (ZCCHC7).